A 147-amino-acid polypeptide reads, in one-letter code: UPF0306 protein YhbP (147 aa).

The protein belongs to the UPF0306 family.

In Shigella dysenteriae serotype 1 (strain Sd197), this protein is UPF0306 protein YhbP.